A 201-amino-acid chain; its full sequence is METEQDEVAQDELGPEIALDKDPFQLTVEDVYDISHIVGQDLLKISREARGVSSLVSDLQFKIVRVLEMLEALVNQSSLSAEELKMERDNLKAEVERLLKDGPQMGVGPDKMVIDLTDPNRPRFTLQELRDVLQERNKLKVKLLVAQDELQCYKSGIIPSPDDQIVTLENESMITCSPRENESKEKSTVKSLFSFKQGKQT.

Residues 14–108 enclose the RH1 domain; sequence GPEIALDKDP…LKDGPQMGVG (95 aa). Residues 67 to 155 adopt a coiled-coil conformation; sequence LEMLEALVNQ…AQDELQCYKS (89 aa). Positions 121-197 constitute an RH2 domain; the sequence is RPRFTLQELR…TVKSLFSFKQ (77 aa). The disordered stretch occupies residues 177–201; sequence SPRENESKEKSTVKSLFSFKQGKQT. The segment covering 179 to 188 has biased composition (basic and acidic residues); it reads RENESKEKST.

This sequence belongs to the RILPL family.

It localises to the cytoplasm. The protein resides in the cytosol. The protein localises to the cytoskeleton. Its subcellular location is the microtubule organizing center. It is found in the centrosome. It localises to the cell projection. The protein resides in the cilium. In terms of biological role, involved in cell shape and neuronal morphogenesis, positively regulating the establishment and maintenance of dendritic spines. Plays a role in cellular protein transport. This Xenopus tropicalis (Western clawed frog) protein is RILP-like protein 2 (rilpl2).